A 149-amino-acid polypeptide reads, in one-letter code: Large ribosomal subunit protein bL9 (149 aa).

Belongs to the bacterial ribosomal protein bL9 family.

Binds to the 23S rRNA. The polypeptide is Large ribosomal subunit protein bL9 (Dichelobacter nodosus (strain VCS1703A)).